A 203-amino-acid chain; its full sequence is LexA repressor (203 aa).

A DNA-binding region (H-T-H motif) is located at residues 30 to 50; it reads VREICQAVSLKSTSTVHGHLK. Catalysis depends on for autocatalytic cleavage activity residues S127 and K164.

Belongs to the peptidase S24 family. As to quaternary structure, homodimer.

It catalyses the reaction Hydrolysis of Ala-|-Gly bond in repressor LexA.. Its function is as follows. Represses a number of genes involved in the response to DNA damage (SOS response), including recA and lexA. In the presence of single-stranded DNA, RecA interacts with LexA causing an autocatalytic cleavage which disrupts the DNA-binding part of LexA, leading to derepression of the SOS regulon and eventually DNA repair. The sequence is that of LexA repressor from Clostridium perfringens (strain 13 / Type A).